We begin with the raw amino-acid sequence, 332 residues long: Glyceraldehyde-3-phosphate dehydrogenase 2 (332 aa).

Residues 11-12 (RI), D32, and R77 contribute to the NAD(+) site. D-glyceraldehyde 3-phosphate-binding positions include 148-150 (SCT), T179, 208-209 (TG), and R231. The active-site Nucleophile is the C149. The residue at position 273 (Y273) is a Phosphotyrosine. T274 carries the post-translational modification Phosphothreonine. Residue N313 coordinates NAD(+).

This sequence belongs to the glyceraldehyde-3-phosphate dehydrogenase family. As to quaternary structure, homotetramer.

It is found in the cytoplasm. It carries out the reaction D-glyceraldehyde 3-phosphate + phosphate + NAD(+) = (2R)-3-phospho-glyceroyl phosphate + NADH + H(+). It participates in carbohydrate degradation; glycolysis; pyruvate from D-glyceraldehyde 3-phosphate: step 1/5. This is Glyceraldehyde-3-phosphate dehydrogenase 2 (Gapdh2) from Drosophila melanogaster (Fruit fly).